The chain runs to 94 residues: Beta-defensin 132 (94 aa).

A signal peptide spans 1 to 22; it reads MKFLLLVLAALGFLTQVIPASA. 2 disulfides stabilise this stretch: cysteine 27-cysteine 55 and cysteine 39-cysteine 56. A disordered region spans residues 72-94; the sequence is GNHWQSRRNTQRKDKKQQTTVTS. Positions 76-86 are enriched in basic residues; sequence QSRRNTQRKDK.

This sequence belongs to the beta-defensin family.

The protein resides in the secreted. Functionally, has antibacterial activity. The sequence is that of Beta-defensin 132 (DEFB132) from Gorilla gorilla gorilla (Western lowland gorilla).